Reading from the N-terminus, the 369-residue chain is uncharacterized protein (369 aa).

This is an uncharacterized protein from Caenorhabditis elegans.